The following is a 332-amino-acid chain: Ketol-acid reductoisomerase (NADP(+)) (332 aa).

The 181-residue stretch at 2-182 (AKIYHDLEVS…GATRAGVLET (181 aa)) folds into the KARI N-terminal Rossmann domain. Residues 25–28 (YGSQ), arginine 48, serine 53, and 83–86 (DTEQ) contribute to the NADP(+) site. Histidine 108 is a catalytic residue. Glycine 134 contacts NADP(+). In terms of domain architecture, KARI C-terminal knotted spans 183-328 (TFKEETETDL…KVIREMMPWL (146 aa)). 4 residues coordinate Mg(2+): aspartate 191, glutamate 195, glutamate 227, and glutamate 231. Serine 252 lines the substrate pocket.

This sequence belongs to the ketol-acid reductoisomerase family. Mg(2+) serves as cofactor.

It catalyses the reaction (2R)-2,3-dihydroxy-3-methylbutanoate + NADP(+) = (2S)-2-acetolactate + NADPH + H(+). The catalysed reaction is (2R,3R)-2,3-dihydroxy-3-methylpentanoate + NADP(+) = (S)-2-ethyl-2-hydroxy-3-oxobutanoate + NADPH + H(+). It participates in amino-acid biosynthesis; L-isoleucine biosynthesis; L-isoleucine from 2-oxobutanoate: step 2/4. It functions in the pathway amino-acid biosynthesis; L-valine biosynthesis; L-valine from pyruvate: step 2/4. Its function is as follows. Involved in the biosynthesis of branched-chain amino acids (BCAA). Catalyzes an alkyl-migration followed by a ketol-acid reduction of (S)-2-acetolactate (S2AL) to yield (R)-2,3-dihydroxy-isovalerate. In the isomerase reaction, S2AL is rearranged via a Mg-dependent methyl migration to produce 3-hydroxy-3-methyl-2-ketobutyrate (HMKB). In the reductase reaction, this 2-ketoacid undergoes a metal-dependent reduction by NADPH to yield (R)-2,3-dihydroxy-isovalerate. This chain is Ketol-acid reductoisomerase (NADP(+)), found in Dictyoglomus thermophilum (strain ATCC 35947 / DSM 3960 / H-6-12).